The chain runs to 260 residues: Dehydrogenase/reductase SDR family member 11 (260 aa).

Residues 1–30 (MARPGMERWRDRLALVTGASGGIGAAVARA) form the signal peptide. Residues 18–23 (GASGGI), 43–44 (RT), glutamate 49, 70–71 (DL), and asparagine 97 each bind NADP(+). Positions 151 and 166 each coordinate substrate. Residues tyrosine 166, lysine 170, 201 to 204 (VETQ), and lysine 208 contribute to the NADP(+) site. Catalysis depends on tyrosine 166, which acts as the Proton acceptor.

It belongs to the short-chain dehydrogenases/reductases (SDR) family. Homotetramer. In terms of tissue distribution, isoform 1: Ubiquitously expressed, with highest levels in testis, small intestine, colon, kidney, brain and heart. Isoform 3: Expressed in brain, heart and skeletal muscle.

The protein localises to the secreted. It carries out the reaction a 3beta-hydroxysteroid + NADP(+) = a 3-oxosteroid + NADPH + H(+). It catalyses the reaction 17beta-estradiol + NAD(+) = estrone + NADH + H(+). The catalysed reaction is 17beta-estradiol + NADP(+) = estrone + NADPH + H(+). Its pathway is steroid biosynthesis; estrogen biosynthesis. Its activity is regulated as follows. Inhibited by flavonoids including apigenin, luteolin, genistein, kaempferol and quercetin and also by carbenoxolone, zearalenone, glycyrrhetinic, curcumin and flufenamic acid. Functionally, catalyzes the conversion of the 17-keto group of estrone, 4- and 5-androstenes and 5-alpha-androstanes into their 17-beta-hydroxyl metabolites and the conversion of the 3-keto group of 3-, 3,17- and 3,20- diketosteroids into their 3-hydroxyl metabolites. Exhibits reductive 3-beta-hydroxysteroid dehydrogenase activity toward 5-beta-androstanes, 5-beta-pregnanes, 4-pregnenes and bile acids. May also reduce endogenous and exogenous alpha-dicarbonyl compounds and xenobiotic alicyclic ketones. This chain is Dehydrogenase/reductase SDR family member 11 (DHRS11), found in Homo sapiens (Human).